We begin with the raw amino-acid sequence, 776 residues long: Microtubule-associated protein tau (776 aa).

The span at 1-26 (MAEPRQEFDVMEDHAGTYGLGDRKDQ) shows a compositional bias: basic and acidic residues. The segment at 1–591 (MAEPRQEFDV…PVPMPDLKNV (591 aa)) is disordered. A2 carries the post-translational modification N-acetylalanine. Y18 and Y29 each carry phosphotyrosine. A Glycyl lysine isopeptide (Lys-Gly) (interchain with G-Cter in ubiquitin) cross-link involves residue K44. 2 positions are modified to phosphoserine: S46 and S61. Residues 61–71 (SETSDAKSTPT) show a composition bias toward polar residues. A phosphothreonine mark is found at T69, T71, and T111. Basic and acidic residues-rich tracts occupy residues 179-189 (EGGRHAPELLK) and 207-216 (GGKERPGIKE). A compositionally biased stretch (acidic residues) spans 217–228 (EVDEDRDVDESS). Positions 314–323 (EQAHSEEHLG) are enriched in basic and acidic residues. Over residues 325-340 (AAFPGAPGEGPEAQGP) the composition is skewed to low complexity. 2 stretches are compositionally biased toward basic and acidic residues: residues 344–356 (EDTK…EPSE) and 381–393 (KSKD…DKKA). Residues 442-453 (VSSVTXRTGSSG) show a composition bias toward low complexity. Basic and acidic residues predominate over residues 455–466 (KEMKLKGADGKT). Position 470 is a phosphothreonine (T470). R472 is modified (omega-N-methylarginine). Position 480 is an N6,N6-dimethyllysine; alternate (K480). K480 is subject to N6-acetyllysine; alternate. Residues T486, T492, and T498 each carry the phosphothreonine modification. 3 positions are modified to phosphoserine: S502, S526, and S530. A compositionally biased stretch (basic and acidic residues) spans 517–528 (KSERGEPPKSGD). Residues 529–549 (RSGYSSPGSPGTPGSRSRTPS) show a composition bias toward low complexity. Y532 bears the Phosphotyrosine mark. A phosphoserine mark is found at S533, S534, and S537. T540 and T547 each carry phosphothreonine. A Phosphoserine modification is found at S549. Residue T552 is modified to Phosphothreonine. An N6-acetyllysine modification is found at K560. At T566 the chain carries Phosphothreonine. A phosphoserine mark is found at S570 and S572. Tau/MAP repeat units lie at residues 579–609 (QTAP…GGGK), 610–640 (VQII…GGGS), 641–671 (VQIV…GGGQ), and 672–703 (VEVK…GGGN). A Glycyl lysine isopeptide (Lys-Gly) (interchain with G-Cter in ubiquitin) cross-link involves residue K589. K594 is subject to N6-acetyllysine; alternate. Position 594 is an N6-methyllysine; alternate (K594). K594 participates in a covalent cross-link: Glycyl lysine isopeptide (Lys-Gly) (interchain with G-Cter in ubiquitin); alternate. S597 is modified (phosphoserine). A Glycyl lysine isopeptide (Lys-Gly) (interchain with G-Cter in ubiquitin) cross-link involves residue K602. Residue K616 is modified to N6-acetyllysine; alternate. K616 is covalently cross-linked (Glycyl lysine isopeptide (Lys-Gly) (interchain with G-Cter in ubiquitin); alternate). 2 positions are modified to phosphoserine: S620 and S624. N6-acetyllysine is present on K625. Phosphoserine is present on S628. An N6-acetyllysine; alternate modification is found at K633. K633 participates in a covalent cross-link: Glycyl lysine isopeptide (Lys-Gly) (interchain with G-Cter in ubiquitin); alternate. S640 bears the Phosphoserine mark. Position 646 is an N6,N6-dimethyllysine; alternate (K646). N6-acetyllysine; alternate is present on residues K646, K652, and K656. Residues K646, K652, and K656 each participate in a glycyl lysine isopeptide (Lys-Gly) (interchain with G-Cter in ubiquitin); alternate cross-link. S659 is modified (phosphoserine). K666, K678, and K682 each carry N6-acetyllysine; alternate. Glycyl lysine isopeptide (Lys-Gly) (interchain with G-Cter in ubiquitin); alternate cross-links involve residues K666, K678, and K682. The residue at position 684 (R684) is an Omega-N-methylarginine. Residue S687 is modified to Phosphoserine. A Glycyl lysine isopeptide (Lys-Gly) (interchain with G-Cter in ubiquitin) cross-link involves residue K688. At S691 the chain carries Phosphoserine. At K704 the chain carries N6-acetyllysine; alternate. K704 is covalently cross-linked (Glycyl lysine isopeptide (Lys-Gly) (interchain with G-Cter in ubiquitin); alternate). K710 participates in a covalent cross-link: Glycyl lysine isopeptide (Lys-Gly) (interchain with G-Cter in ubiquitin). The residue at position 720 (K720) is an N6-acetyllysine; alternate. K720 participates in a covalent cross-link: Glycyl lysine isopeptide (Lys-Gly) (interchain with G-Cter in ubiquitin); alternate. Phosphotyrosine is present on Y729. S731 and S735 each carry phosphoserine. The tract at residues 733 to 752 (VVSGDTSPRHLSNVSSTGSI) is disordered. Over residues 736-751 (GDTSPRHLSNVSSTGS) the composition is skewed to polar residues. Phosphothreonine is present on T738. 4 positions are modified to phosphoserine: S739, S744, S751, and S757. A Phosphothreonine modification is found at T762.

In terms of assembly, interacts with MARK1, MARK2, MARK3 and MARK4. Interacts with SQSTM1 when polyubiquitinated. Interacts with PSMC2 through SQSTM1. Interacts with FKBP4. Binds to CSNK1D. Interacts with SGK1. Interacts with EPM2A; the interaction dephosphorylates MAPT at Ser-396. Interacts with PIN1. Interacts with LRRK2. Interacts with LRP1, leading to endocytosis; this interaction is reduced in the presence of LRPAP1/RAP. Post-translationally, polyubiquitinated. Requires functional TRAF6 and may provoke SQSTM1-dependent degradation by the proteasome. Phosphorylation at various serine and threonine residues in S-P or T-P motifs by proline-directed protein kinases (PDPK1, CDK1, CDK5, GSK3, MAPK) (a few sites per protein in interphase, more in mitosis), and at serine residues in K-X-G-S motifs by MAP/microtubule affinity-regulating kinase (MARK1, MARK2, MARK3 or MARK4), causing detachment from microtubules, and their disassembly. Phosphorylation at Ser-597 by BRSK1 and BRSK2 in neurons affects ability to bind microtubules and plays a role in neuron polarization. Phosphorylated by PHK. Dephosphorylation at several serine and threonine residues by the serine/threonine phosphatase PPP5C.

The protein resides in the cytoplasm. Its subcellular location is the cytosol. The protein localises to the cell membrane. It localises to the cytoskeleton. It is found in the cell projection. The protein resides in the axon. Its subcellular location is the dendrite. Functionally, promotes microtubule assembly and stability, and might be involved in the establishment and maintenance of neuronal polarity. The C-terminus binds axonal microtubules while the N-terminus binds neural plasma membrane components, suggesting that tau functions as a linker protein between both. Axonal polarity is predetermined by tau localization (in the neuronal cell) in the domain of the cell body defined by the centrosome. The short isoforms allow plasticity of the cytoskeleton whereas the longer isoforms may preferentially play a role in its stabilization. The protein is Microtubule-associated protein tau (MAPT) of Hylobates lar (Lar gibbon).